Consider the following 330-residue polypeptide: Beta-hexosaminidase (330 aa).

Substrate contacts are provided by residues aspartate 62, arginine 70, arginine 133, and 163-164; that span reads KH. Histidine 176 serves as the catalytic Proton donor/acceptor. The Nucleophile role is filled by aspartate 246.

This sequence belongs to the glycosyl hydrolase 3 family. NagZ subfamily.

It localises to the cytoplasm. It carries out the reaction Hydrolysis of terminal non-reducing N-acetyl-D-hexosamine residues in N-acetyl-beta-D-hexosaminides.. Its pathway is cell wall biogenesis; peptidoglycan recycling. In terms of biological role, plays a role in peptidoglycan recycling by cleaving the terminal beta-1,4-linked N-acetylglucosamine (GlcNAc) from peptide-linked peptidoglycan fragments, giving rise to free GlcNAc, anhydro-N-acetylmuramic acid and anhydro-N-acetylmuramic acid-linked peptides. This is Beta-hexosaminidase from Idiomarina loihiensis (strain ATCC BAA-735 / DSM 15497 / L2-TR).